A 322-amino-acid polypeptide reads, in one-letter code: Malate dehydrogenase 1 (322 aa).

Residues 10–15 and aspartate 34 each bind NAD(+); that span reads GSGQIG. Residues arginine 83 and arginine 89 each coordinate substrate. NAD(+) is bound by residues asparagine 96 and 119–121; that span reads ITN. Asparagine 121 and arginine 152 together coordinate substrate. Histidine 176 acts as the Proton acceptor in catalysis.

This sequence belongs to the LDH/MDH superfamily. MDH type 3 family.

It catalyses the reaction (S)-malate + NAD(+) = oxaloacetate + NADH + H(+). Catalyzes the reversible oxidation of malate to oxaloacetate. The protein is Malate dehydrogenase 1 of Rhodopseudomonas palustris (strain BisB18).